We begin with the raw amino-acid sequence, 457 residues long: Ribosomal protein uS12 methylthiotransferase RimO (457 aa).

The 120-residue stretch at 9 to 128 (KKVHFISLGC…ILKNSDEGEK (120 aa)) folds into the MTTase N-terminal domain. Positions 18, 54, 88, 163, 167, and 170 each coordinate [4Fe-4S] cluster. The 236-residue stretch at 149–384 (SQPGHRAYLK…MEVQQNISRE (236 aa)) folds into the Radical SAM core domain. Residues 387 to 455 (SDFVGKTLQV…EYDLIGEIVV (69 aa)) enclose the TRAM domain.

It belongs to the methylthiotransferase family. RimO subfamily. [4Fe-4S] cluster is required as a cofactor.

The protein resides in the cytoplasm. It carries out the reaction L-aspartate(89)-[ribosomal protein uS12]-hydrogen + (sulfur carrier)-SH + AH2 + 2 S-adenosyl-L-methionine = 3-methylsulfanyl-L-aspartate(89)-[ribosomal protein uS12]-hydrogen + (sulfur carrier)-H + 5'-deoxyadenosine + L-methionine + A + S-adenosyl-L-homocysteine + 2 H(+). Functionally, catalyzes the methylthiolation of an aspartic acid residue of ribosomal protein uS12. This Bdellovibrio bacteriovorus (strain ATCC 15356 / DSM 50701 / NCIMB 9529 / HD100) protein is Ribosomal protein uS12 methylthiotransferase RimO.